A 334-amino-acid polypeptide reads, in one-letter code: N-acetyl-gamma-glutamyl-phosphate reductase (334 aa).

Residue Cys-149 is part of the active site.

The protein belongs to the NAGSA dehydrogenase family. Type 1 subfamily.

It localises to the cytoplasm. The enzyme catalyses N-acetyl-L-glutamate 5-semialdehyde + phosphate + NADP(+) = N-acetyl-L-glutamyl 5-phosphate + NADPH + H(+). The protein operates within amino-acid biosynthesis; L-arginine biosynthesis; N(2)-acetyl-L-ornithine from L-glutamate: step 3/4. Its function is as follows. Catalyzes the NADPH-dependent reduction of N-acetyl-5-glutamyl phosphate to yield N-acetyl-L-glutamate 5-semialdehyde. The sequence is that of N-acetyl-gamma-glutamyl-phosphate reductase from Sulfurimonas denitrificans (strain ATCC 33889 / DSM 1251) (Thiomicrospira denitrificans (strain ATCC 33889 / DSM 1251)).